A 284-amino-acid polypeptide reads, in one-letter code: 2-dehydro-3-deoxyphosphooctonate aldolase (284 aa).

This sequence belongs to the KdsA family.

It is found in the cytoplasm. The catalysed reaction is D-arabinose 5-phosphate + phosphoenolpyruvate + H2O = 3-deoxy-alpha-D-manno-2-octulosonate-8-phosphate + phosphate. Its pathway is carbohydrate biosynthesis; 3-deoxy-D-manno-octulosonate biosynthesis; 3-deoxy-D-manno-octulosonate from D-ribulose 5-phosphate: step 2/3. It functions in the pathway bacterial outer membrane biogenesis; lipopolysaccharide biosynthesis. This is 2-dehydro-3-deoxyphosphooctonate aldolase from Escherichia coli O6:K15:H31 (strain 536 / UPEC).